The sequence spans 366 residues: Histidinol-phosphate aminotransferase 2 (366 aa).

Residue K226 is modified to N6-(pyridoxal phosphate)lysine.

The protein belongs to the class-II pyridoxal-phosphate-dependent aminotransferase family. Histidinol-phosphate aminotransferase subfamily. Homodimer. It depends on pyridoxal 5'-phosphate as a cofactor.

The catalysed reaction is L-histidinol phosphate + 2-oxoglutarate = 3-(imidazol-4-yl)-2-oxopropyl phosphate + L-glutamate. It functions in the pathway amino-acid biosynthesis; L-histidine biosynthesis; L-histidine from 5-phospho-alpha-D-ribose 1-diphosphate: step 7/9. The chain is Histidinol-phosphate aminotransferase 2 from Haemophilus influenzae (strain 86-028NP).